The sequence spans 602 residues: Beta-(1--&gt;2)glucan export ATP-binding/permease protein NdvA (602 aa).

The ABC transmembrane type-1 domain occupies 21–311 (GWVLAGANLL…VVGFVNSVFM (291 aa)). 6 helical membrane passes run 22–42 (WVLA…PVLF), 68–88 (LLLA…AVAL), 146–166 (EHFA…YINW), 167–187 (RLAL…TLVV), 238–258 (LLAM…ITRA), and 285–305 (IVMF…VVGF). One can recognise an ABC transporter domain in the interval 345 to 579 (VEFDNVSFSY…RGYFAELAHA (235 aa)). ATP is bound at residue 378–385 (GATGAGKS).

This sequence belongs to the ABC transporter superfamily. Beta-(1--&gt;2)glucan exporter (TC 3.A.1.108.1) family. Homodimer.

The protein localises to the cell inner membrane. It carries out the reaction [(1-&gt;2)-beta-D-glucosyl](n)(in) + ATP + H2O = [(1-&gt;2)-beta-D-glucosyl](n)(out) + ADP + phosphate + H(+). Functionally, involved in Beta-(1--&gt;2)glucan export. Transmembrane domains (TMD) form a pore in the inner membrane and the ATP-binding domain (NBD) is responsible for energy generation. In Rhodopseudomonas palustris (strain BisA53), this protein is Beta-(1--&gt;2)glucan export ATP-binding/permease protein NdvA.